The following is a 217-amino-acid chain: Protein GrpE (217 aa).

Positions 1-63 (MAETSNSENK…AADSELSLQS (63 aa)) are disordered. Positions 10–32 (KTSEEAKASEKNSRSITLEETKL) are enriched in basic and acidic residues. Positions 37–63 (SEESTQTTESTQAQAAEAADSELSLQS) are enriched in low complexity.

Belongs to the GrpE family. In terms of assembly, homodimer.

It localises to the cytoplasm. Its function is as follows. Participates actively in the response to hyperosmotic and heat shock by preventing the aggregation of stress-denatured proteins, in association with DnaK and GrpE. It is the nucleotide exchange factor for DnaK and may function as a thermosensor. Unfolded proteins bind initially to DnaJ; upon interaction with the DnaJ-bound protein, DnaK hydrolyzes its bound ATP, resulting in the formation of a stable complex. GrpE releases ADP from DnaK; ATP binding to DnaK triggers the release of the substrate protein, thus completing the reaction cycle. Several rounds of ATP-dependent interactions between DnaJ, DnaK and GrpE are required for fully efficient folding. The polypeptide is Protein GrpE (Leptospira borgpetersenii serovar Hardjo-bovis (strain JB197)).